Here is a 398-residue protein sequence, read N- to C-terminus: Fructose-bisphosphate aldolase 2, chloroplastic (398 aa).

The N-terminal 46 residues, 1-46 (MASTSLLKASPVLDKSEWVKGQSVLFRQPSSASVVLRNRATSLTVR), are a transit peptide targeting the chloroplast. Arginine 95 is a binding site for substrate. Position 157 is a phosphoserine (serine 157). Lysine 185 contacts substrate. Serine 215 carries the phosphoserine modification. Glutamate 225 functions as the Proton acceptor in the catalytic mechanism. Lysine 267 functions as the Schiff-base intermediate with dihydroxyacetone-P in the catalytic mechanism. 309-311 (SGG) serves as a coordination point for substrate. The residue at position 394 (lysine 394) is an N6,N6,N6-trimethyllysine.

This sequence belongs to the class I fructose-bisphosphate aldolase family. Homotetramer. Can be trimethylated at Lys-394 by LSMT-L. The methylation level has no influence on the ologomerization state or on the kinetic properties of the enzyme. In terms of processing, phosphorylated on tyrosine residues in response to abscisic acid (ABA) in germinating seeds. In terms of tissue distribution, highly expressed in rosettes leaves.

It localises to the plastid. Its subcellular location is the chloroplast. It is found in the plastoglobule. The protein resides in the chloroplast stroma. It carries out the reaction beta-D-fructose 1,6-bisphosphate = D-glyceraldehyde 3-phosphate + dihydroxyacetone phosphate. The protein operates within carbohydrate degradation; glycolysis; D-glyceraldehyde 3-phosphate and glycerone phosphate from D-glucose: step 4/4. Its function is as follows. Plays a key role in glycolysis and gluconeogenesis. The sequence is that of Fructose-bisphosphate aldolase 2, chloroplastic from Arabidopsis thaliana (Mouse-ear cress).